The primary structure comprises 190 residues: Hypoxanthine/guanine phosphoribosyltransferase (190 aa).

Belongs to the purine/pyrimidine phosphoribosyltransferase family. Archaeal HPRT subfamily. As to quaternary structure, homodimer.

The protein localises to the cytoplasm. It catalyses the reaction IMP + diphosphate = hypoxanthine + 5-phospho-alpha-D-ribose 1-diphosphate. It carries out the reaction GMP + diphosphate = guanine + 5-phospho-alpha-D-ribose 1-diphosphate. It functions in the pathway purine metabolism; IMP biosynthesis via salvage pathway; IMP from hypoxanthine: step 1/1. Catalyzes a salvage reaction resulting in the formation of IMP that is energically less costly than de novo synthesis. This is Hypoxanthine/guanine phosphoribosyltransferase from Methanobacterium paludis (strain DSM 25820 / JCM 18151 / SWAN1).